A 425-amino-acid polypeptide reads, in one-letter code: 3-isopropylmalate dehydratase large subunit (425 aa).

Residues cysteine 306, cysteine 366, and cysteine 369 each coordinate [4Fe-4S] cluster.

This sequence belongs to the aconitase/IPM isomerase family. LeuC type 2 subfamily. Heterodimer of LeuC and LeuD. [4Fe-4S] cluster is required as a cofactor.

The catalysed reaction is (2R,3S)-3-isopropylmalate = (2S)-2-isopropylmalate. Its pathway is amino-acid biosynthesis; L-leucine biosynthesis; L-leucine from 3-methyl-2-oxobutanoate: step 2/4. Catalyzes the isomerization between 2-isopropylmalate and 3-isopropylmalate, via the formation of 2-isopropylmaleate. The sequence is that of 3-isopropylmalate dehydratase large subunit from Nautilia profundicola (strain ATCC BAA-1463 / DSM 18972 / AmH).